The chain runs to 128 residues: Large ribosomal subunit protein bL12 (128 aa).

It belongs to the bacterial ribosomal protein bL12 family. In terms of assembly, homodimer. Part of the ribosomal stalk of the 50S ribosomal subunit. Forms a multimeric L10(L12)X complex, where L10 forms an elongated spine to which 2 to 4 L12 dimers bind in a sequential fashion. Binds GTP-bound translation factors.

Functionally, forms part of the ribosomal stalk which helps the ribosome interact with GTP-bound translation factors. Is thus essential for accurate translation. The sequence is that of Large ribosomal subunit protein bL12 from Kosmotoga olearia (strain ATCC BAA-1733 / DSM 21960 / TBF 19.5.1).